A 135-amino-acid polypeptide reads, in one-letter code: AVCVSLLGAANIPPQPLNLLQFKNMIQCAGSRLWVAYVKYGCYCGPGGTGTPLDQLDRCCQTHDHCYDNAKKFGNCIPYFKSYEYTCNKPDLTCTDAKGSCARNVCDCDRAAAICFAAAPYNLANFGINKETHCQ.

7 disulfide bridges follow: Cys-28–Cys-87, Cys-42–Cys-134, Cys-44–Cys-60, Cys-59–Cys-115, Cys-66–Cys-108, Cys-76–Cys-101, and Cys-94–Cys-106. The Ca(2+) site is built by Tyr-43, Gly-45, and Gly-47. Residue His-63 is part of the active site. Residue Asp-64 coordinates Ca(2+). Residue Asp-109 is part of the active site.

It belongs to the phospholipase A2 family. Group I subfamily. D49 sub-subfamily. Ca(2+) serves as cofactor. In terms of tissue distribution, expressed by the venom gland.

Its subcellular location is the secreted. The catalysed reaction is a 1,2-diacyl-sn-glycero-3-phosphocholine + H2O = a 1-acyl-sn-glycero-3-phosphocholine + a fatty acid + H(+). Its function is as follows. Snake venom phospholipase A2 (PLA2) that inhibits neuromuscular transmission by blocking acetylcholine release from the nerve termini. PLA2 catalyzes the calcium-dependent hydrolysis of the 2-acyl groups in 3-sn-phosphoglycerides. In Bungarus fasciatus (Banded krait), this protein is Basic phospholipase A2 KBf-VA.